A 407-amino-acid chain; its full sequence is Tryptophan synthase beta chain (407 aa).

K98 carries the post-translational modification N6-(pyridoxal phosphate)lysine.

The protein belongs to the TrpB family. As to quaternary structure, tetramer of two alpha and two beta chains. Pyridoxal 5'-phosphate is required as a cofactor.

It carries out the reaction (1S,2R)-1-C-(indol-3-yl)glycerol 3-phosphate + L-serine = D-glyceraldehyde 3-phosphate + L-tryptophan + H2O. The protein operates within amino-acid biosynthesis; L-tryptophan biosynthesis; L-tryptophan from chorismate: step 5/5. The beta subunit is responsible for the synthesis of L-tryptophan from indole and L-serine. This Bradyrhizobium sp. (strain BTAi1 / ATCC BAA-1182) protein is Tryptophan synthase beta chain.